Reading from the N-terminus, the 152-residue chain is Protein-export protein SecB (152 aa).

Belongs to the SecB family. As to quaternary structure, homotetramer, a dimer of dimers. One homotetramer interacts with 1 SecA dimer.

Its subcellular location is the cytoplasm. One of the proteins required for the normal export of preproteins out of the cell cytoplasm. It is a molecular chaperone that binds to a subset of precursor proteins, maintaining them in a translocation-competent state. It also specifically binds to its receptor SecA. The protein is Protein-export protein SecB of Thiobacillus denitrificans (strain ATCC 25259 / T1).